Reading from the N-terminus, the 216-residue chain is Phosphatidylserine decarboxylase proenzyme (216 aa).

Ser182 serves as the catalytic Schiff-base intermediate with substrate; via pyruvic acid. Ser182 bears the Pyruvic acid (Ser); by autocatalysis mark.

Belongs to the phosphatidylserine decarboxylase family. PSD-A subfamily. Heterodimer of a large membrane-associated beta subunit and a small pyruvoyl-containing alpha subunit. Requires pyruvate as cofactor. Post-translationally, is synthesized initially as an inactive proenzyme. Formation of the active enzyme involves a self-maturation process in which the active site pyruvoyl group is generated from an internal serine residue via an autocatalytic post-translational modification. Two non-identical subunits are generated from the proenzyme in this reaction, and the pyruvate is formed at the N-terminus of the alpha chain, which is derived from the carboxyl end of the proenzyme. The post-translation cleavage follows an unusual pathway, termed non-hydrolytic serinolysis, in which the side chain hydroxyl group of the serine supplies its oxygen atom to form the C-terminus of the beta chain, while the remainder of the serine residue undergoes an oxidative deamination to produce ammonia and the pyruvoyl prosthetic group on the alpha chain.

It localises to the cell membrane. It carries out the reaction a 1,2-diacyl-sn-glycero-3-phospho-L-serine + H(+) = a 1,2-diacyl-sn-glycero-3-phosphoethanolamine + CO2. It functions in the pathway phospholipid metabolism; phosphatidylethanolamine biosynthesis; phosphatidylethanolamine from CDP-diacylglycerol: step 2/2. Functionally, catalyzes the formation of phosphatidylethanolamine (PtdEtn) from phosphatidylserine (PtdSer). The chain is Phosphatidylserine decarboxylase proenzyme from Burkholderia pseudomallei (strain 1106a).